A 62-amino-acid chain; its full sequence is Potassium channel toxin alpha-KTx 10.1 (62 aa).

Residues 1–22 form the signal peptide; the sequence is MEGIAKITLILLFLFVTMHTFA. A propeptide spanning residues 23–28 is cleaved from the precursor; it reads NWNTEA. Intrachain disulfides connect Cys31/Cys50, Cys36/Cys55, and Cys40/Cys57. The residue at position 60 (Tyr60) is a Tyrosine amide.

The protein belongs to the short scorpion toxin superfamily. Potassium channel inhibitor family. Alpha-KTx 10 subfamily. As to expression, expressed by the venom gland.

Its subcellular location is the secreted. Its function is as follows. Blocks Shaker B (Sh) and voltage-gated potassium-channels Kv1.1/KCNA1, Kv1.2/KCNA2, Kv1.3/KCNA3. Also inhibits small conductance calcium-activated potassium channels (KCNN) and intermediate conductance calcium-activated potassium channel (KCa3.1/KCNN4). This is Potassium channel toxin alpha-KTx 10.1 from Centruroides noxius (Mexican scorpion).